Here is a 385-residue protein sequence, read N- to C-terminus: WD repeat-containing protein 74 (385 aa).

6 WD repeats span residues 40–80 (RREE…FQGQ), 83–122 (CPGG…ASSD), 128–168 (RVGP…EPLF), 179–220 (DLRV…RRPV), 224–266 (TYGE…GCLK), and 267–306 (GLAG…GLEH). Ser214 carries the phosphoserine modification. Lys311 is modified (N6-methyllysine). The tract at residues 320–385 (SGRDNWEDEP…KKKRPGSTSS (66 aa)) is required for nucleolar and nuclear location. The tract at residues 323–385 (DNWEDEPQEP…KKKRPGSTSS (63 aa)) is disordered. The span at 372–385 (ARRRKKKRPGSTSS) shows a compositional bias: basic residues.

In terms of assembly, isoform 1 interacts (through WDR repeats) with NVL; the interaction is independent of RNA or pre-60S ribosome particles. Isoform 2 does not interact with NVL. Interacts with MTREX; the interaction dissociation in a late stage of rRNA synthesis is required for appropriate maturation of pre-60S particles and depends on the ATPase activity of NVL.

The protein localises to the nucleus. Its subcellular location is the nucleolus. In terms of biological role, regulatory protein of the MTREX-exosome complex involved in the synthesis of the 60S ribosomal subunit. Participates in an early cleavage of the pre-rRNA processing pathway in cooperation with NVL. This chain is WD repeat-containing protein 74 (WDR74), found in Bos taurus (Bovine).